A 464-amino-acid chain; its full sequence is Arginine biosynthesis bifunctional protein ArgJ, chloroplastic (464 aa).

Residues Thr-208, Lys-234, Thr-245, Glu-332, Asn-459, and Thr-464 each coordinate substrate. The active-site Nucleophile is the Thr-245.

The protein belongs to the ArgJ family. In terms of assembly, heterodimer of an alpha and a beta chain.

It is found in the plastid. The protein resides in the chloroplast. It carries out the reaction N(2)-acetyl-L-ornithine + L-glutamate = N-acetyl-L-glutamate + L-ornithine. The catalysed reaction is L-glutamate + acetyl-CoA = N-acetyl-L-glutamate + CoA + H(+). It functions in the pathway amino-acid biosynthesis; L-arginine biosynthesis; L-ornithine and N-acetyl-L-glutamate from L-glutamate and N(2)-acetyl-L-ornithine (cyclic): step 1/1. The protein operates within amino-acid biosynthesis; L-arginine biosynthesis; N(2)-acetyl-L-ornithine from L-glutamate: step 1/4. Its function is as follows. Catalyzes two activities which are involved in the cyclic version of arginine biosynthesis: the synthesis of acetylglutamate from glutamate and acetyl-CoA, and of ornithine by transacetylation between acetylornithine and glutamate. This chain is Arginine biosynthesis bifunctional protein ArgJ, chloroplastic, found in Sorghum bicolor (Sorghum).